A 690-amino-acid chain; its full sequence is Rho guanine nucleotide exchange factor 4 (690 aa).

The ABR (APC-binding region) domain stretch occupies residues 73 to 126 (KTQRKKLQKQAHVERRLHIGAVHKDGVKCWRKTIITSPESLNLPRRSHPLSQSA). Positions 113–145 (LNLPRRSHPLSQSAPTGLNHMGWPEHTPGTAMP) are disordered. One can recognise an SH3 domain in the interval 194–253 (GSVVCAEALWDHVTMDDQELGFKAGDVIEVMDATNREWWWGRVADGEGWFPASFVRLRVN). The interval 257-282 (PADDDAPLAGNSGAEDGGAEAQSSKD) is disordered. The DH domain maps to 284-468 (MRTNVINEIL…KNVAQLINER (185 aa)). Residues 499-606 (ELIYSGELTR…WLKAFARERE (108 aa)) form the PH domain.

As to quaternary structure, isoform 3 interacts with RHOA and RAC1, and (via ABR domain) with APC. Found in a complex consisting of ARHGEF4, APC and CTNNB1. As to expression, expressed at high levels in the brain, skeletal muscle and testis and at low levels in the kidney, lung, small intestine, ovary and prostate. Expression is aberrantly enhanced in most colorectal tumors.

Its subcellular location is the cytoplasm. It is found in the cell projection. The protein resides in the ruffle membrane. Functionally, acts as a guanine nucleotide exchange factor (GEF) for RHOA, RAC1 and CDC42 GTPases. Binding of APC may activate RAC1 GEF activity. The APC-ARHGEF4 complex seems to be involved in cell migration as well as in E-cadherin-mediated cell-cell adhesion. Required for MMP9 up-regulation via the JNK signaling pathway in colorectal tumor cells. Involved in tumor angiogenesis and may play a role in intestinal adenoma formation and tumor progression. This is Rho guanine nucleotide exchange factor 4 (ARHGEF4) from Homo sapiens (Human).